The primary structure comprises 375 residues: Succinyl-diaminopimelate desuccinylase (375 aa).

Histidine 66 is a Zn(2+) binding site. The active site involves aspartate 68. Aspartate 99 is a binding site for Zn(2+). Glutamate 133 serves as the catalytic Proton acceptor. Zn(2+) contacts are provided by glutamate 134, glutamate 162, and histidine 348.

The protein belongs to the peptidase M20A family. DapE subfamily. In terms of assembly, homodimer. Zn(2+) serves as cofactor. It depends on Co(2+) as a cofactor.

The catalysed reaction is N-succinyl-(2S,6S)-2,6-diaminopimelate + H2O = (2S,6S)-2,6-diaminopimelate + succinate. It functions in the pathway amino-acid biosynthesis; L-lysine biosynthesis via DAP pathway; LL-2,6-diaminopimelate from (S)-tetrahydrodipicolinate (succinylase route): step 3/3. In terms of biological role, catalyzes the hydrolysis of N-succinyl-L,L-diaminopimelic acid (SDAP), forming succinate and LL-2,6-diaminopimelate (DAP), an intermediate involved in the bacterial biosynthesis of lysine and meso-diaminopimelic acid, an essential component of bacterial cell walls. In Herminiimonas arsenicoxydans, this protein is Succinyl-diaminopimelate desuccinylase.